We begin with the raw amino-acid sequence, 206 residues long: Probable GTP-binding protein EngB (206 aa).

The EngB-type G domain maps to 7-195; that stretch reads DCDEVVLLGR…EEALQAIFSD (189 aa). Residues 15-22, 41-45, 60-63, 140-143, and 175-177 contribute to the GTP site; these read GRSNVGKS, GVTRS, DLPG, NKID, and ISA. Mg(2+)-binding residues include serine 22 and threonine 43.

It belongs to the TRAFAC class TrmE-Era-EngA-EngB-Septin-like GTPase superfamily. EngB GTPase family. It depends on Mg(2+) as a cofactor.

In terms of biological role, necessary for normal cell division and for the maintenance of normal septation. This Haloquadratum walsbyi (strain DSM 16790 / HBSQ001) protein is Probable GTP-binding protein EngB.